Reading from the N-terminus, the 177-residue chain is Large ribosomal subunit protein uL6 (177 aa).

This sequence belongs to the universal ribosomal protein uL6 family. In terms of assembly, part of the 50S ribosomal subunit.

Functionally, this protein binds to the 23S rRNA, and is important in its secondary structure. It is located near the subunit interface in the base of the L7/L12 stalk, and near the tRNA binding site of the peptidyltransferase center. The chain is Large ribosomal subunit protein uL6 from Delftia acidovorans (strain DSM 14801 / SPH-1).